The primary structure comprises 449 residues: Hyaluronidase-3 (449 aa).

The N-terminal stretch at Met1–Val23 is a signal peptide. 2 disulfide bridges follow: Cys47–Cys340 and Cys211–Cys227. Asn67, Asn103, and Asn111 each carry an N-linked (GlcNAc...) asparagine glycan. The active-site Proton donor is Glu135. Asn153 carries an N-linked (GlcNAc...) asparagine glycan. Asn357 carries an N-linked (GlcNAc...) asparagine glycan. Intrachain disulfides connect Cys365-Cys376, Cys370-Cys427, and Cys429-Cys438. N-linked (GlcNAc...) asparagine glycosylation is present at Asn401. One can recognise an EGF-like domain in the interval Cys427–Cys438.

It belongs to the glycosyl hydrolase 56 family. As to quaternary structure, monomer. In terms of tissue distribution, expressed by the venom gland.

The protein resides in the secreted. It catalyses the reaction Random hydrolysis of (1-&gt;4)-linkages between N-acetyl-beta-D-glucosamine and D-glucuronate residues in hyaluronate.. Snake venom endo-hyaluronidase that degrades hyaluronan to smaller oligosaccharide fragments. In venom, it is not toxic by itself, but increases the diffusion of other venom proteins by degrading the extracellular matrix. In addition, it displays antiedematogenic activity. The polypeptide is Hyaluronidase-3 (Cerastes cerastes (Horned desert viper)).